Here is a 61-residue protein sequence, read N- to C-terminus: Sperm protamine P1 (61 aa).

Residues 1 to 61 are disordered; it reads MARYRHSRSR…RYSRRRRRRY (61 aa).

The protein belongs to the protamine P1 family. In terms of tissue distribution, testis.

It localises to the nucleus. The protein resides in the chromosome. Protamines substitute for histones in the chromatin of sperm during the haploid phase of spermatogenesis. They compact sperm DNA into a highly condensed, stable and inactive complex. This is Sperm protamine P1 (PRM1) from Onychogalea fraenata (Bridled nail-tailed wallaby).